We begin with the raw amino-acid sequence, 743 residues long: Protein STB5 (743 aa).

Positions 22-49 (CARCRKLKKKCGKQIPTCANCDKNGAHC) form a DNA-binding region, zn(2)-C6 fungal-type. Disordered stretches follow at residues 81 to 100 (VGKS…PLSA) and 155 to 249 (NSNP…YANN). Polar residues-rich tracts occupy residues 85-99 (PLST…SPLS) and 155-198 (NSNP…SPLI). Residues 213–238 (NNNRNTSNGDNGSNVNHDNNNGSTNT) show a composition bias toward low complexity. Polar residues predominate over residues 239–249 (PQLSLTPYANN).

Its subcellular location is the nucleus. Functionally, binds to SIN3. This chain is Protein STB5 (STB5), found in Saccharomyces cerevisiae (strain ATCC 204508 / S288c) (Baker's yeast).